A 205-amino-acid chain; its full sequence is Small ribosomal subunit protein uS4 (205 aa).

A compositionally biased stretch (basic and acidic residues) spans 1-16 (MSKRESSKYKIDRRMG). The interval 1-46 (MSKRESSKYKIDRRMGENIWGRPKSPVNRREYGPGQHGQRRKGKLS) is disordered. The region spanning 94-157 (SRLDAIVYRA…KQLVTVLEAV (64 aa)) is the S4 RNA-binding domain.

Belongs to the universal ribosomal protein uS4 family. As to quaternary structure, part of the 30S ribosomal subunit. Contacts protein S5. The interaction surface between S4 and S5 is involved in control of translational fidelity.

In terms of biological role, one of the primary rRNA binding proteins, it binds directly to 16S rRNA where it nucleates assembly of the body of the 30S subunit. Its function is as follows. With S5 and S12 plays an important role in translational accuracy. The sequence is that of Small ribosomal subunit protein uS4 from Rhizobium etli (strain CIAT 652).